A 363-amino-acid polypeptide reads, in one-letter code: 3-isopropylmalate dehydrogenase (363 aa).

78-91 (GKKWDYLPIESRPE) is a binding site for NAD(+). The substrate site is built by arginine 99, arginine 109, arginine 138, and aspartate 227. Mg(2+) contacts are provided by aspartate 227, aspartate 251, and aspartate 255. Residue 285–297 (GSAPDIEGKNIAN) coordinates NAD(+).

The protein belongs to the isocitrate and isopropylmalate dehydrogenases family. LeuB type 1 subfamily. Homodimer. Mg(2+) is required as a cofactor. The cofactor is Mn(2+).

The protein localises to the cytoplasm. It catalyses the reaction (2R,3S)-3-isopropylmalate + NAD(+) = 4-methyl-2-oxopentanoate + CO2 + NADH. It participates in amino-acid biosynthesis; L-leucine biosynthesis; L-leucine from 3-methyl-2-oxobutanoate: step 3/4. Functionally, catalyzes the oxidation of 3-carboxy-2-hydroxy-4-methylpentanoate (3-isopropylmalate) to 3-carboxy-4-methyl-2-oxopentanoate. The product decarboxylates to 4-methyl-2 oxopentanoate. The polypeptide is 3-isopropylmalate dehydrogenase (Buchnera aphidicola subsp. Schizaphis graminum (strain Sg)).